Here is a 426-residue protein sequence, read N- to C-terminus: D-ribulose kinase (426 aa).

Residues D8, 12-15, S72, and D221 contribute to the substrate site; that span reads SGAR. ATP contacts are provided by residues S243, G281, and 376–380; that span reads GGAKN.

This sequence belongs to the FGGY kinase family. It depends on a divalent metal cation as a cofactor.

It catalyses the reaction D-ribulose + ATP = D-ribulose 5-phosphate + ADP + H(+). In terms of biological role, exhibits ATP hydrolysis without substrate. Phosphorylates D-ribulose. This is D-ribulose kinase from Synechococcus elongatus (strain ATCC 33912 / PCC 7942 / FACHB-805) (Anacystis nidulans R2).